The primary structure comprises 229 residues: Probable queuosine precursor transporter (229 aa).

7 helical membrane passes run 6-26 (FWIF…KGFG), 28-48 (MGLF…VVKT), 49-69 (VELF…IFFA), 86-106 (VWLG…VLLF), 118-138 (LETI…AFIF), 160-182 (LWLR…FTAV), and 192-214 (VWLH…SLPY).

It belongs to the vitamin uptake transporter (VUT/ECF) (TC 2.A.88) family. Q precursor transporter subfamily.

Its subcellular location is the cell membrane. Its function is as follows. Involved in the import of queuosine (Q) precursors, required for Q precursor salvage. The sequence is that of Probable queuosine precursor transporter (ypdP) from Bacillus subtilis (strain 168).